The chain runs to 169 residues: Cell division inhibitor SulA (169 aa).

The tract at residues 106–112 (ALRTGNY) is ftsZ binding. Positions 162–169 (KIHSNLYH) are lon protease binding.

The protein belongs to the SulA family. Interacts with FtsZ. Post-translationally, is rapidly cleaved and degraded by the Lon protease once DNA damage is repaired.

Its function is as follows. Component of the SOS system and an inhibitor of cell division. Accumulation of SulA causes rapid cessation of cell division and the appearance of long, non-septate filaments. In the presence of GTP, binds a polymerization-competent form of FtsZ in a 1:1 ratio, thus inhibiting FtsZ polymerization and therefore preventing it from participating in the assembly of the Z ring. This mechanism prevents the premature segregation of damaged DNA to daughter cells during cell division. The protein is Cell division inhibitor SulA of Shigella boydii serotype 18 (strain CDC 3083-94 / BS512).